The chain runs to 127 residues: MWKSILAIALGAALGALLRWFLGLKLNSLLPSIPPGTLLANLVGGYAIGAAIAYFAQAPGIAPEWRLLIITGFCGGLTTFSTFSAEVVTLLQEGRLGWAAGAIATHVGGSLLMTLLGLFSMNWMLGR.

The next 4 helical transmembrane spans lie at Ser4–Leu24, Gly36–Ala56, Leu68–Val88, and Ala99–Phe119. Na(+)-binding residues include Gly75 and Thr78.

This sequence belongs to the fluoride channel Fluc/FEX (TC 1.A.43) family.

It is found in the cell inner membrane. It carries out the reaction fluoride(in) = fluoride(out). With respect to regulation, na(+) is not transported, but it plays an essential structural role and its presence is essential for fluoride channel function. Its function is as follows. Fluoride-specific ion channel. Important for reducing fluoride concentration in the cell, thus reducing its toxicity. In Pseudomonas paraeruginosa (strain DSM 24068 / PA7) (Pseudomonas aeruginosa (strain PA7)), this protein is Fluoride-specific ion channel FluC.